The chain runs to 271 residues: Probable septum site-determining protein MinC (271 aa).

Residues R106–R125 are disordered. Residues S110–A119 show a composition bias toward low complexity.

This sequence belongs to the MinC family. As to quaternary structure, interacts with MinD and FtsZ.

Its function is as follows. Cell division inhibitor that blocks the formation of polar Z ring septums. Rapidly oscillates between the poles of the cell to destabilize FtsZ filaments that have formed before they mature into polar Z rings. Prevents FtsZ polymerization. This chain is Probable septum site-determining protein MinC, found in Burkholderia thailandensis (strain ATCC 700388 / DSM 13276 / CCUG 48851 / CIP 106301 / E264).